A 77-amino-acid chain; its full sequence is Thioredoxin (77 aa).

Active-site nucleophile residues include Cys11 and Cys14. Cysteines 11 and 14 form a disulfide.

Belongs to the glutaredoxin family.

Its function is as follows. Does not function as a glutathione-disulfide oxidoreductase in the presence of glutathione and glutathione reductase. Has low thioredoxin activity in vitro. The protein is Thioredoxin of Methanothermobacter thermautotrophicus (strain ATCC 29096 / DSM 1053 / JCM 10044 / NBRC 100330 / Delta H) (Methanobacterium thermoautotrophicum).